We begin with the raw amino-acid sequence, 658 residues long: Gametogenetin (658 aa).

Disordered stretches follow at residues M1 to G268 and K285 to G584. Residues S14 to P30 are compositionally biased toward basic and acidic residues. Residues P54–S83 show a composition bias toward low complexity. The tract at residues R127–P491 is interaction with GGNBP1. The segment covering P163–P188 has biased composition (pro residues). Over residues L194–S204 the composition is skewed to polar residues. The span at S252 to G264 shows a compositional bias: low complexity. S384 is subject to Phosphoserine. Positions P398–P409 are enriched in low complexity. A compositionally biased stretch (pro residues) spans R423–P460. Positions L489–A516 are enriched in low complexity. The interval E496–T658 is interactions with ZNF403/GGNBP2 and OAZ3. A compositionally biased stretch (basic residues) spans I527 to R536.

In terms of assembly, interacts with FANCL, GGNBP1 and ZNF403/GGNBP2.

Functionally, may be involved in spermatogenesis. In Rattus norvegicus (Rat), this protein is Gametogenetin (Ggn).